A 252-amino-acid polypeptide reads, in one-letter code: Enolase-phosphatase E1 (252 aa).

Mg(2+) is bound by residues Asp-14 and Glu-16. Substrate-binding positions include 143–144 (SS) and Lys-177. Asp-202 contributes to the Mg(2+) binding site.

This sequence belongs to the HAD-like hydrolase superfamily. MasA/MtnC family. In terms of assembly, monomer. Requires Mg(2+) as cofactor.

It localises to the cytoplasm. It is found in the nucleus. It carries out the reaction 5-methylsulfanyl-2,3-dioxopentyl phosphate + H2O = 1,2-dihydroxy-5-(methylsulfanyl)pent-1-en-3-one + phosphate. It functions in the pathway amino-acid biosynthesis; L-methionine biosynthesis via salvage pathway; L-methionine from S-methyl-5-thio-alpha-D-ribose 1-phosphate: step 3/6. Its pathway is amino-acid biosynthesis; L-methionine biosynthesis via salvage pathway; L-methionine from S-methyl-5-thio-alpha-D-ribose 1-phosphate: step 4/6. Its function is as follows. Bifunctional enzyme that catalyzes the enolization of 2,3-diketo-5-methylthiopentyl-1-phosphate (DK-MTP-1-P) into the intermediate 2-hydroxy-3-keto-5-methylthiopentenyl-1-phosphate (HK-MTPenyl-1-P), which is then dephosphorylated to form the acireductone 1,2-dihydroxy-3-keto-5-methylthiopentene (DHK-MTPene). This chain is Enolase-phosphatase E1, found in Drosophila persimilis (Fruit fly).